A 744-amino-acid polypeptide reads, in one-letter code: Tripartite motif-containing protein 2 (744 aa).

Ser10 carries the phosphoserine modification. The RING-type zinc-finger motif lies at Cys23 to Arg64. Residues Gly113–Leu154 form a B box-type zinc finger. The Zn(2+) site is built by Cys118, His121, Cys141, and His146. One copy of the Filamin repeat lies at Thr320 to Val421. At Thr371 the chain carries Phosphothreonine. 3 positions are modified to phosphoserine: Ser375, Ser424, and Ser428. The tract at residues Glu432–Lys462 is disordered. 6 NHL repeats span residues Ile473–Asp516, Lys520–Asp563, Gly564–Asn605, Val609–Glu652, Met656–Ser699, and Gly700–Leu743.

This sequence belongs to the TRIM/RBCC family. In terms of assembly, forms homooligomers. Interacts with TRIM3; this interaction reduces TRIM2 activity. Interacts with myosin V; myosin V may not be a substrate for ubiquitination. Interacts with NEFL. Interacts with phosphorylated BCL2L11. Interacts with SIRPA. In terms of processing, RING-type zinc finger-dependent and UBE2D1-dependent autoubiquitination.

The catalysed reaction is S-ubiquitinyl-[E2 ubiquitin-conjugating enzyme]-L-cysteine + [acceptor protein]-L-lysine = [E2 ubiquitin-conjugating enzyme]-L-cysteine + N(6)-ubiquitinyl-[acceptor protein]-L-lysine.. It participates in protein modification; protein ubiquitination. Its function is as follows. UBE2D1-dependent E3 ubiquitin-protein ligase that mediates the ubiquitination of NEFL and of phosphorylated BCL2L11. Plays a neuroprotective function. May play a role in neuronal rapid ischemic tolerance. Plays a role in antiviral immunity and limits New World arenavirus infection independently of its ubiquitin ligase activity. The protein is Tripartite motif-containing protein 2 (Trim2) of Rattus norvegicus (Rat).